A 475-amino-acid polypeptide reads, in one-letter code: Protein FIZZY-RELATED 1 (475 aa).

The disordered stretch occupies residues 1–27; it reads MEEDESTTPKKKSDSQLNLPPSMNRPT. Polar residues predominate over residues 15 to 27; that stretch reads SQLNLPPSMNRPT. 7 WD repeats span residues 166–203, 207–246, 249–289, 290–329, 332–374, 376–417, and 420–459; these read QDDF…VTKL, GVDE…NIRT, GHRL…SKLK, GHKS…PVLR, EHAA…HLNC, DTNS…KLAT, and GHSY…KSQS.

Belongs to the WD repeat CDC20/Fizzy family. In terms of assembly, associates with the APC/C complex. Interacts with CDC20-1, CDC20-2, CYCA1-1, CYCA1-2, CYCA3-4, CYCB1-1 and CYCB1-2. Binds to GIG1. Expressed in the root tip, predominantly in the root cap, quiescent center cells, surrounding stem cells and columella.

It is found in the nucleus. The protein operates within protein modification; protein ubiquitination. Functionally, activator protein that regulates the ubiquitin ligase activity and substrate specificity of the anaphase promoting complex/cyclosome (APC/C). Required for meristem organization and maintenance of quiescent center identity and stem cells. The chain is Protein FIZZY-RELATED 1 (FZR1) from Arabidopsis thaliana (Mouse-ear cress).